The following is a 576-amino-acid chain: Arginine--tRNA ligase (576 aa).

Positions 126-136 match the 'HIGH' region motif; that stretch reads ANPTGPMHIGH.

It belongs to the class-I aminoacyl-tRNA synthetase family. Monomer.

It is found in the cytoplasm. The enzyme catalyses tRNA(Arg) + L-arginine + ATP = L-arginyl-tRNA(Arg) + AMP + diphosphate. The polypeptide is Arginine--tRNA ligase (argS) (Rickettsia prowazekii (strain Madrid E)).